The sequence spans 3856 residues: Hybrid PKS-NRPS synthetase traA (3856 aa).

One can recognise a Ketosynthase family 3 (KS3) domain in the interval 6-438; it reads PEPIAIVGSG…GTNGHAILEE (433 aa). Catalysis depends on for beta-ketoacyl synthase activity residues Cys-179, His-318, and His-358. The malonyl-CoA:ACP transacylase (MAT) domain stretch occupies residues 554 to 885; that stretch reads IFTGQGAQWA…FSDALGFVWT (332 aa). The interval 943–1081 is N-terminal hotdog fold; sequence HELLGVPSPN…GKVTVIYGTP (139 aa). A dehydratase (DH) domain region spans residues 943–1247; that stretch reads HELLGVPSPN…LSMKPFSPAT (305 aa). A PKS/mFAS DH domain is found at 943–1249; it reads HELLGVPSPN…MKPFSPATAD (307 aa). His-975 (proton acceptor; for dehydratase activity) is an active-site residue. The segment at 1096–1249 is C-terminal hotdog fold; the sequence is MVDIQAEQFY…MKPFSPATAD (154 aa). Asp-1156 acts as the Proton donor; for dehydratase activity in catalysis. Positions 1290–1456 are methyltransferase (MT) domain; the sequence is LACVAQQIVH…RKAGFSGIDS (167 aa). A ketoreductase (KR) domain region spans residues 1984–2158; sequence TYVLVGLSGR…ATSLDIGSIV (175 aa). A Carrier 1 domain is found at 2266–2347; that stretch reads ADALEILKEL…TLCQQALEKL (82 aa). O-(pantetheine 4'-phosphoryl)serine is present on Ser-2307. The segment at 2351–2422 is disordered; that stretch reads ILPNVESGGP…SSTPATVLSN (72 aa). Composition is skewed to low complexity over residues 2357 to 2369 and 2399 to 2418; these read SGGPSKTGSSKPT and TTSPQSTLSSDQSPSSTPAT. The segment at 2446 to 2884 is condensation (C) domain; that stretch reads VKTELVSFQQ…FALFSDKELK (439 aa). Residues 2910 to 3310 are adenylation (A) domain; that stretch reads QIAKENDDKV…GAMVFHNRIA (401 aa). Residues 3403–3429 form a disordered region; sequence SKTDRKALKELPLPQRSNHDTGDNTES. A Carrier 2 domain is found at 3428–3507; the sequence is ESLTETMLEL…DMTQKIEESL (80 aa). Ser-3467 is subject to O-(pantetheine 4'-phosphoryl)serine. A reductase (R) domain region spans residues 3544–3768; sequence VTGSGGFLGK…EMTPIHSAAS (225 aa).

In the C-terminal section; belongs to the NRP synthetase family.

The protein operates within secondary metabolite biosynthesis. Hybrid PKS-NRPS synthetase; part of the tra gene cluster that produces terrestric acid. The clavatol biosynthesis cluster cla and the terrestric acid cluster tra are both involved in the production of peniphenones and penilactones. The non-reducing PKS claF is responsible for the formation of clavatol from successive condensations of 3 malonyl-CoA units, presumably with a simple acetyl-CoA starter unit, and 2 methylation steps. The esterase claE probably collaborates with claF by catalyzing the hydrolysis of ACP-bound acyl intermediates to free the ACP from stalled intermediates. The clavatol oxidase claD then converts clavatol to hydroxyclavatol. Spontaneous dehydration of hydroxyclavatol leads to the accumulation of the highly active ortho-quinone methide. On the other hand, the PKS-NRPS hybrid traA is involved in the formation of crustosic acid, with the help of traB and traD. The polyketide synthase module (PKS) of traA is responsible for the synthesis of the polyketide backbone via the condensation of an acetyl-CoA starter unit with 3 malonyl-CoA units. The downstream nonribosomal peptide synthetase (NRPS) module then amidates the carboxyl end of the polyketide with L-malic acid. Because traA lacks a designated enoylreductase (ER) domain, the required activity is provided the enoyl reductase traG. Crustosic acid undergoes decarboxylation and isomerization to the terrestric acid, catalyzed by the 2-oxoglutarate-dependent dioxygenase traH. Both acids are further converted to the 2 gamma-butyrolactones (R)-5-methyltetronic acid and (S)-5-carboxylmethyltetronic acid, with involvement of the cytochrome P450 monooxygenase claJ. Spontaneous addition of the methide to these gamma-butyrolactones leads to peniphenone D and penilactone D, which undergo again stereospecific attacking by methide to give penilactones A and B. The chain is Hybrid PKS-NRPS synthetase traA from Penicillium crustosum (Blue mold fungus).